Consider the following 865-residue polypeptide: cGMP-specific 3',5'-cyclic phosphodiesterase (865 aa).

At serine 92 the chain carries Phosphoserine. GAF domains lie at 154–304 (DVTA…GIVL) and 336–493 (SLEV…GLGI). The PDEase domain occupies 526–850 (ETRELQALSA…QKWQALAEQQ (325 aa)). Histidine 603 functions as the Proton donor in the catalytic mechanism. Positions 607, 643, 644, and 754 each coordinate Zn(2+). Position 644 (aspartate 644) interacts with Mg(2+). Glutamine 807 serves as a coordination point for 3',5'-cyclic GMP.

This sequence belongs to the cyclic nucleotide phosphodiesterase family. The cofactor is Zn(2+). Mg(2+) serves as cofactor. Phosphorylation is regulated by binding of cGMP to the two allosteric sites. Phosphorylation by PRKG1 leads to its activation.

It carries out the reaction 3',5'-cyclic GMP + H2O = GMP + H(+). The protein operates within purine metabolism; 3',5'-cyclic GMP degradation; GMP from 3',5'-cyclic GMP: step 1/1. Its function is as follows. Plays a role in signal transduction by regulating the intracellular concentration of cyclic nucleotides. This phosphodiesterase catalyzes the specific hydrolysis of cGMP to 5'-GMP. Specifically regulates nitric-oxide-generated cGMP. The chain is cGMP-specific 3',5'-cyclic phosphodiesterase (Pde5a) from Mus musculus (Mouse).